The sequence spans 121 residues: Large ribosomal subunit protein uL22 (121 aa).

This sequence belongs to the universal ribosomal protein uL22 family. In terms of assembly, part of the 50S ribosomal subunit.

Functionally, this protein binds specifically to 23S rRNA; its binding is stimulated by other ribosomal proteins, e.g. L4, L17, and L20. It is important during the early stages of 50S assembly. It makes multiple contacts with different domains of the 23S rRNA in the assembled 50S subunit and ribosome. The globular domain of the protein is located near the polypeptide exit tunnel on the outside of the subunit, while an extended beta-hairpin is found that lines the wall of the exit tunnel in the center of the 70S ribosome. The protein is Large ribosomal subunit protein uL22 of Kocuria rhizophila (strain ATCC 9341 / DSM 348 / NBRC 103217 / DC2201).